The chain runs to 199 residues: MSVLVPMVVEQTSRGERAYDIYSRLLKDRIIFLGSAIDDHVANLVIAQMLFLEAEDPDKDIHLYINSPGGSISAGMAIFDTMQYIRPDVSTICVGLAASMGAFLLAAGAKGKRFALPNSEIMIHQPMGGTQGQAVDIEIHAKRILAIRDNLNRILSEITGKPLEQIARDTDRDHFMTAREAREYGLIDEVITKRELPAK.

The active-site Nucleophile is the S99. H124 is an active-site residue.

This sequence belongs to the peptidase S14 family. Fourteen ClpP subunits assemble into 2 heptameric rings which stack back to back to give a disk-like structure with a central cavity, resembling the structure of eukaryotic proteasomes.

The protein localises to the cytoplasm. It catalyses the reaction Hydrolysis of proteins to small peptides in the presence of ATP and magnesium. alpha-casein is the usual test substrate. In the absence of ATP, only oligopeptides shorter than five residues are hydrolyzed (such as succinyl-Leu-Tyr-|-NHMec, and Leu-Tyr-Leu-|-Tyr-Trp, in which cleavage of the -Tyr-|-Leu- and -Tyr-|-Trp bonds also occurs).. In terms of biological role, cleaves peptides in various proteins in a process that requires ATP hydrolysis. Has a chymotrypsin-like activity. Plays a major role in the degradation of misfolded proteins. In Moorella thermoacetica (strain ATCC 39073 / JCM 9320), this protein is ATP-dependent Clp protease proteolytic subunit.